Reading from the N-terminus, the 154-residue chain is Large ribosomal subunit protein uL30 (154 aa).

Residues 114–139 form a disordered region; that stretch reads PTLRLHPPRGGHDGIKHPTKEGGQLG. The span at 123-133 shows a compositional bias: basic and acidic residues; the sequence is GGHDGIKHPTK.

It belongs to the universal ribosomal protein uL30 family. In terms of assembly, part of the 50S ribosomal subunit.

This is Large ribosomal subunit protein uL30 from Natronomonas pharaonis (strain ATCC 35678 / DSM 2160 / CIP 103997 / JCM 8858 / NBRC 14720 / NCIMB 2260 / Gabara) (Halobacterium pharaonis).